A 425-amino-acid polypeptide reads, in one-letter code: Inhibin beta A chain (425 aa).

The first 20 residues, 1-20, serve as a signal peptide directing secretion; it reads MPLLWLRGFLLASCWIIVRS. Residues 21-309 constitute a propeptide that is removed on maturation; sequence SPTPGSEGHS…EDHPHRRRRR (289 aa). N-linked (GlcNAc...) asparagine glycosylation is present at Asn165. A disordered region spans residues 259 to 289; it reads KKKKKEEEGEGKKRDGEGGAGGDEEKEQSHR. Positions 263 to 275 are enriched in basic and acidic residues; sequence KEEEGEGKKRDGE. Disulfide bonds link Cys313-Cys321, Cys320-Cys390, Cys349-Cys422, and Cys353-Cys424.

This sequence belongs to the TGF-beta family. Dimeric, linked by one or more disulfide bonds. Inhibin A is a dimer of alpha/INHA and beta-A/INHBA. Activin A is a homodimer of beta-A/INHBA. Activin AB is a dimer of beta-A/INHBA and beta-B/INHBB. Interacts with FST and FSTL3; these interactions prevent activin A interaction to its type II receptor. Activin A interacts with ACVR2A. Activin A interacts with BMPR2. Inhibin A interacts with ACVR1; this interaction creates a non-signaling complex (NSC) that inhibits ACVR1-mediated BMP signaling. Inhibin A interacts with ACVR2A.

The protein localises to the secreted. Its function is as follows. Inhibins/activins are involved in regulating a number of diverse functions such as hypothalamic and pituitary hormone secretion, gonadal hormone secretion, germ cell development and maturation, erythroid differentiation, insulin secretion, nerve cell survival, embryonic axial development or bone growth, depending on their subunit composition. Activin A is a homodimer of INHBA that plays a role in several essential biological processes including embryonic development, stem cell maintenance and differentiation, haematopoiesis, cell proliferation and tissue fibrosis. Signals through type I (such as ACVR1B or ACVR1C) and type II receptors (such as ACVR2A, ACVR2B or BMPR2) which, upon ligand binding, phosphorylate SMAD2 and SMAD3 intracellular signaling mediators that form a complex with SMAD4, translocate to the nucleus and modulate gene expression. Can also activate alternative non-canonical intracellular signaling pathways including the p38 MAPK, extracellular signal-regulated kinases 1/2 (ERK1/2) and c-Jun N-terminal kinases (JNKs) to modulate cell migration and differentiation. Alternatively, promotes osteoblastic differentiation via ACVRL1-SMAD1/5/9 pathway. In addition, can engage the type I receptor ACVR1 to form an ACVR1-activin A-type II receptor non-signaling complex (NSC) that renders receptors unavailable for engagement with BMPs, hence resulting in an apparent inhibition of ACVR1-mediated BMP signaling. In terms of biological role, inhibin A is a dimer of alpha/INHA and beta-A/INHBA that functions as a feedback regulator in the hypothalamic-pituitary-gonadal (HPG) axis. Inhibits the secretion of FSH from the anterior pituitary gland by acting on pituitary gonadotrope cells. Antagonizes activin A by binding to the proteoglycan, betaglycan, and forming a stable complex with and, thereby, sequestering type II activin receptors while excluding type I receptor. The sequence is that of Inhibin beta A chain (INHBA) from Bos taurus (Bovine).